Here is a 66-residue protein sequence, read N- to C-terminus: Large ribosomal subunit protein bL33c (66 aa).

It belongs to the bacterial ribosomal protein bL33 family.

The protein resides in the plastid. It localises to the chloroplast. The protein is Large ribosomal subunit protein bL33c of Cryptomeria japonica (Japanese cedar).